The sequence spans 402 residues: Imidazolonepropionase (402 aa).

His-66 and His-68 together coordinate Fe(3+). His-66 and His-68 together coordinate Zn(2+). Positions 75, 138, and 171 each coordinate 4-imidazolone-5-propanoate. Tyr-138 provides a ligand contact to N-formimidoyl-L-glutamate. His-236 is a binding site for Fe(3+). His-236 contacts Zn(2+). Residue Gln-239 coordinates 4-imidazolone-5-propanoate. A Fe(3+)-binding site is contributed by Asp-311. Asp-311 serves as a coordination point for Zn(2+). Residues Asn-313 and Gly-315 each contribute to the N-formimidoyl-L-glutamate site. Thr-316 provides a ligand contact to 4-imidazolone-5-propanoate.

Belongs to the metallo-dependent hydrolases superfamily. HutI family. Requires Zn(2+) as cofactor. Fe(3+) serves as cofactor.

Its subcellular location is the cytoplasm. The catalysed reaction is 4-imidazolone-5-propanoate + H2O = N-formimidoyl-L-glutamate. The protein operates within amino-acid degradation; L-histidine degradation into L-glutamate; N-formimidoyl-L-glutamate from L-histidine: step 3/3. In terms of biological role, catalyzes the hydrolytic cleavage of the carbon-nitrogen bond in imidazolone-5-propanoate to yield N-formimidoyl-L-glutamate. It is the third step in the universal histidine degradation pathway. This Pseudomonas aeruginosa (strain UCBPP-PA14) protein is Imidazolonepropionase.